The sequence spans 653 residues: Protein SCARECROW (653 aa).

Disordered stretches follow at residues 1-69 (MAES…RRVS) and 193-265 (PSSS…AVQT). Low complexity predominate over residues 17 to 31 (PLRTTSSGSSSSNNR). Residues 32–41 (GPPPPPPPPL) show a composition bias toward pro residues. Residues 51 to 63 (EMSSNPDYNNSSR) show a composition bias toward polar residues. Over residues 209-230 (QISNNPSPPQQQQQHQQQQQQH) the composition is skewed to low complexity. Residues 246 to 265 (STDAPPQPETVTATVPAVQT) are compositionally biased toward polar residues. Residues 281–650 (QKQDEEGLHL…LSLLTASAWT (370 aa)) form the GRAS domain. The tract at residues 288-351 (LHLLTLLLQC…LLNSCLGIYA (64 aa)) is leucine repeat I (LRI). Residues 295 to 299 (LQCAE) carry the LxCxE motif motif. The VHIID stretch occupies residues 370-435 (FQVFNGISPL…GGPPHVRLTG (66 aa)). Residues 401 to 405 (VHIID) carry the VHIID motif. The segment at 445 to 477 (ATGKRLSDFADKLGLPFEFCPLAEKVGNLDTER) is leucine repeat II (LRII). The interval 486–573 (VAVHWLQHSL…QQLLSKEIRN (88 aa)) is PFYRE. Residues 576–650 (AVGGPSRSGE…LSLLTASAWT (75 aa)) are SAW.

It belongs to the GRAS family. Interacts with SHR, JKD and MGP. Interacts with SIEL. Interacts with RBR1 through its the LxCxE motif. As to expression, expressed in siliques, leaves and roots. Detected in the initial daughter cell before its asymmetric division and remains expressed only in the endodermal cell layer after the division. Expressed in the endodermis or starch sheath of the seedling hypocotyl, in the leaf bundle sheath cells and the root quiescent center.

The protein localises to the nucleus. Transcription factor required for quiescent center cells specification and maintenance of surrounding stem cells, and for the asymmetric cell division involved in radial pattern formation in roots. Essential for cell division but not differentiation of the ground tissue. Also required for normal shoot gravitropism. Regulates the radial organization of the shoot axial organs. Binds to the promoter of MGP, NUC, RLK and SCL3. Restricts SHR movment and sequesters it into the nucleus of the endodermis. In Arabidopsis thaliana (Mouse-ear cress), this protein is Protein SCARECROW.